The chain runs to 520 residues: GMP synthase [glutamine-hydrolyzing] (520 aa).

The Glutamine amidotransferase type-1 domain occupies 3–200; it reads AIAIIDFGSQ…FLDIANCKRD (198 aa). Cysteine 84 serves as the catalytic Nucleophile. Residues histidine 175 and glutamate 177 contribute to the active site. One can recognise a GMPS ATP-PPase domain in the interval 201–386; that stretch reads WTMKSFIEEQ…IGLSDEIIFQ (186 aa). 228–234 contacts ATP; that stretch reads SGGVDSS.

Homodimer.

It carries out the reaction XMP + L-glutamine + ATP + H2O = GMP + L-glutamate + AMP + diphosphate + 2 H(+). The protein operates within purine metabolism; GMP biosynthesis; GMP from XMP (L-Gln route): step 1/1. Its function is as follows. Catalyzes the synthesis of GMP from XMP. In Wolbachia pipientis wMel, this protein is GMP synthase [glutamine-hydrolyzing].